The following is a 562-amino-acid chain: Eukaryotic translation initiation factor 3 subunit L (562 aa).

Residues 1–29 (MSHAKEDYDSSYDPYSYQADYDGHTGDPK) form a disordered region. The span at 11–20 (SYDPYSYQAD) shows a compositional bias: low complexity. A PCI domain is found at 329–535 (DSIRVFANIL…IHIADTKVAR (207 aa)).

The protein belongs to the eIF-3 subunit L family. In terms of assembly, component of the eukaryotic translation initiation factor 3 (eIF-3) complex, which is composed of 13 subunits: eif3a, eif3b, eif3c, eif3d, eif3e, eif3f, eif3g, eif3h, eif3i, eif3j, eif3k, eif3l and eif3m.

Its subcellular location is the cytoplasm. Its function is as follows. Component of the eukaryotic translation initiation factor 3 (eIF-3) complex, which is involved in protein synthesis of a specialized repertoire of mRNAs and, together with other initiation factors, stimulates binding of mRNA and methionyl-tRNAi to the 40S ribosome. The eIF-3 complex specifically targets and initiates translation of a subset of mRNAs involved in cell proliferation. The protein is Eukaryotic translation initiation factor 3 subunit L (eif3l) of Xenopus laevis (African clawed frog).